The following is a 350-amino-acid chain: Ferredoxin--NADP reductase (350 aa).

8 residues coordinate FAD: Thr14, Asp33, Gln41, Tyr46, Ala86, Phe121, Asp286, and Thr327.

This sequence belongs to the ferredoxin--NADP reductase type 2 family. Homodimer. FAD is required as a cofactor.

It carries out the reaction 2 reduced [2Fe-2S]-[ferredoxin] + NADP(+) + H(+) = 2 oxidized [2Fe-2S]-[ferredoxin] + NADPH. The protein is Ferredoxin--NADP reductase of Flavobacterium johnsoniae (strain ATCC 17061 / DSM 2064 / JCM 8514 / BCRC 14874 / CCUG 350202 / NBRC 14942 / NCIMB 11054 / UW101) (Cytophaga johnsonae).